The primary structure comprises 458 residues: UDP-N-acetylmuramoylalanine--D-glutamate ligase (458 aa).

124–130 (GSDGKTT) contacts ATP.

It belongs to the MurCDEF family.

Its subcellular location is the cytoplasm. It carries out the reaction UDP-N-acetyl-alpha-D-muramoyl-L-alanine + D-glutamate + ATP = UDP-N-acetyl-alpha-D-muramoyl-L-alanyl-D-glutamate + ADP + phosphate + H(+). Its pathway is cell wall biogenesis; peptidoglycan biosynthesis. In terms of biological role, cell wall formation. Catalyzes the addition of glutamate to the nucleotide precursor UDP-N-acetylmuramoyl-L-alanine (UMA). The polypeptide is UDP-N-acetylmuramoylalanine--D-glutamate ligase (Clostridium botulinum (strain Langeland / NCTC 10281 / Type F)).